Consider the following 1989-residue polypeptide: Exophilin-5 (1989 aa).

The 57-residue stretch at 7–63 (AFDFSFLNDEEARKILQVLERNEELQRAEKDRISKLQKTKRDIRWLQGVTGEWFEEI) folds into the RabBD domain. 2 disordered regions span residues 93-117 (NDPI…PFSS) and 348-391 (TQSK…FLRA). Polar residues-rich tracts occupy residues 100 to 111 (TSRSKNVTNQKK) and 359 to 376 (HQQS…WNRS). Basic and acidic residues predominate over residues 377-389 (DSSRDRENQEEFL). Ser603 bears the Phosphoserine mark. Disordered regions lie at residues 631–651 (FSQI…NPTV), 806–827 (STAS…RTDQ), and 882–933 (AALP…NQKN). Positions 641 to 651 (PQSPNLQNPTV) are enriched in polar residues. A phosphoserine mark is found at Ser806 and Ser809. Residues 891–909 (KNSSLDAPVVPSTTVFSRR) show a composition bias toward polar residues. The span at 910–927 (SPSDKDPSLGEREEKDNA) shows a compositional bias: basic and acidic residues. A phosphoserine mark is found at Ser1028 and Ser1086. Disordered regions lie at residues 1094-1113 (EATE…VRKG), 1124-1152 (SCPS…ASEL), and 1365-1493 (EIFS…TNCQ). The span at 1098 to 1110 (RMTNVKSSGSTSV) shows a compositional bias: polar residues. At Ser1124 the chain carries Phosphoserine. Residues 1379–1390 (SENKKERGKKLQ) show a composition bias toward basic and acidic residues. The segment covering 1416-1431 (SINSSNSGPSSLPALS) has biased composition (low complexity). Polar residues predominate over residues 1434–1447 (NIGNSQTRRSSWEC). At Ser1505 the chain carries Phosphoserine. 2 disordered regions span residues 1521-1590 (EETQ…NRSS) and 1644-1737 (PEPT…PITF). Composition is skewed to basic and acidic residues over residues 1551–1560 (ESRKAEDEMQ), 1573–1589 (NKNK…ENRS), and 1658–1670 (RLSE…KKSE). Residues 1685 to 1709 (THVSNQKSNSISQRHQNEFKNVSES) show a composition bias toward polar residues. Phosphoserine occurs at positions 1753, 1768, 1821, and 1851. The tract at residues 1921–1989 (FLKDDLRNPP…LDENDKESEL (69 aa)) is disordered. Residues 1933–1943 (SESLSSNSPSS) are compositionally biased toward low complexity. Acidic residues predominate over residues 1959 to 1989 (YEDDPVDSDCDTDTTTDDEYYLDENDKESEL).

Interacts with RAB27A. In terms of tissue distribution, expressed in keratinocytes.

Its function is as follows. May act as Rab effector protein and play a role in vesicle trafficking. The protein is Exophilin-5 of Homo sapiens (Human).